The following is a 141-amino-acid chain: MWVLGIAATFCGLFLLPGFALQIQCYQCEEFQLNNDCSSPEFIVNCTVNVQDMCQKEVMEQSAGIMYRKSCASSAACLIASAGYQSFCSPGKLNSVCISCCNTPLCNGPRPKKRGSSASALRPGLRTTILFLKLALFSAHC.

The N-terminal stretch at 1 to 20 is a signal peptide; sequence MWVLGIAATFCGLFLLPGFA. 6 cysteine pairs are disulfide-bonded: cysteine 25/cysteine 54, cysteine 28/cysteine 37, cysteine 46/cysteine 71, cysteine 77/cysteine 100, cysteine 88/cysteine 97, and cysteine 101/cysteine 106. Residues 25-107 form the UPAR/Ly6 domain; it reads CYQCEEFQLN…ISCCNTPLCN (83 aa). Asparagine 45 carries N-linked (GlcNAc...) asparagine glycosylation. Residue serine 117 is the site of GPI-anchor amidated serine attachment. Residues 118 to 141 constitute a propeptide, removed in mature form; that stretch reads ASALRPGLRTTILFLKLALFSAHC.

In terms of assembly, interacts with CHRNA4 and nAChRs containing alpha-4:beta-2 (CHRNA4:CHRNB2) and alpha-7 (CHRNA7) subunits.

The protein localises to the cell membrane. Its function is as follows. Believed to act as a modulator of nicotinic acetylcholine receptors (nAChRs) activity. In vitro increases receptor desensitization and decreases affinity for ACh of alpha-4:beta-2-containing nAChRs. May play a role in the intracellular trafficking of alpha-4:beta-2 and alpha-7-containing nAChRs and may inhibit their expression at the cell surface. May be involved in the control of anxiety. The polypeptide is Ly6/PLAUR domain-containing protein 1 (LYPD1) (Homo sapiens (Human)).